An 86-amino-acid polypeptide reads, in one-letter code: UPF0457 protein BCE33L2265 (86 aa).

This sequence belongs to the UPF0457 family.

The polypeptide is UPF0457 protein BCE33L2265 (Bacillus cereus (strain ZK / E33L)).